We begin with the raw amino-acid sequence, 352 residues long: Protein RecA (352 aa).

67–74 is an ATP binding site; that stretch reads GPESSGKT. Positions 333–352 are disordered; it reads DSTPDFAVDGNDAEETEQDF. A compositionally biased stretch (acidic residues) spans 343-352; that stretch reads NDAEETEQDF.

It belongs to the RecA family.

The protein resides in the cytoplasm. In terms of biological role, can catalyze the hydrolysis of ATP in the presence of single-stranded DNA, the ATP-dependent uptake of single-stranded DNA by duplex DNA, and the ATP-dependent hybridization of homologous single-stranded DNAs. It interacts with LexA causing its activation and leading to its autocatalytic cleavage. This chain is Protein RecA, found in Klebsiella pneumoniae (strain 342).